The sequence spans 637 residues: ATP-dependent zinc metalloprotease FtsH (637 aa).

The Cytoplasmic segment spans residues 1–6 (MNNQGR). Residues 7 to 27 (SILAWATLFIFVILLFNVFQS) form a helical membrane-spanning segment. The Periplasmic portion of the chain corresponds to 28-103 (DSLLGGRNNI…VVPLETRMNT (76 aa)). Residues 104-124 (FLGFLISWFPMLLLIGVWVFF) traverse the membrane as a helical segment. Over 125-637 (MRQMHGGGKA…TKAKKENYAS (513 aa)) the chain is Cytoplasmic. 195 to 202 (GPPGTGKT) contributes to the ATP binding site. Residue histidine 417 participates in Zn(2+) binding. Residue glutamate 418 is part of the active site. Residues histidine 421 and aspartate 495 each coordinate Zn(2+). Positions 603–637 (ENKFPFNDSSTIKIDKEKSPEKTKTTKAKKENYAS) are disordered. The segment covering 615–637 (KIDKEKSPEKTKTTKAKKENYAS) has biased composition (basic and acidic residues).

In the central section; belongs to the AAA ATPase family. This sequence in the C-terminal section; belongs to the peptidase M41 family. As to quaternary structure, homohexamer. Zn(2+) is required as a cofactor.

The protein localises to the cell inner membrane. In terms of biological role, acts as a processive, ATP-dependent zinc metallopeptidase for both cytoplasmic and membrane proteins. Plays a role in the quality control of integral membrane proteins. In Rickettsia conorii (strain ATCC VR-613 / Malish 7), this protein is ATP-dependent zinc metalloprotease FtsH.